The sequence spans 809 residues: Sodium/hydrogen exchanger 2 (809 aa).

Helical transmembrane passes span 107-127 (IVPESCLLIMVGLLLGGIIFG), 138-158 (TDVFFLYLLPPIVLDAGYFMP), 169-189 (IFWYAVVGTLWNSIGIGVSLF), 209-229 (LFGSLISAVDPVAVLAVFENI), 237-257 (ILVFGESLLNDAVTVVLYNLF), 278-298 (FFVVGIGGVLIGIFLGFIAAF), and 308-328 (VIEPLFVFLYSYLSYITAEMF). N-linked (GlcNAc...) asparagine glycosylation occurs at Asn-350. Transmembrane regions (helical) follow at residues 361–381 (YFMKMLSSVSETLIFIFMGVS), 392–412 (AFVCFTLAFCLIWRALGVFVL), 430–450 (FIIAYGGLRGAICFALVFLLP), and 459–479 (LFITAAIVVIFFTVFILGITI). Composition is skewed to basic and acidic residues over residues 648–660 (IRKDNSLNRERRA) and 793–809 (RASEPGNRKSRLGSDKP). 2 disordered regions span residues 648-700 (IRKD…EADA) and 734-809 (EVDA…SDKP).

Belongs to the monovalent cation:proton antiporter 1 (CPA1) transporter (TC 2.A.36) family. Interacts with CHP1 and CHP2. In terms of tissue distribution, high levels in intestine and kidney. Strongly expressed in gastric epithelial cells, with particularly high expression levels in mucous cells.

It is found in the apical cell membrane. The catalysed reaction is Na(+)(in) + H(+)(out) = Na(+)(out) + H(+)(in). Plasma membrane Na(+)/H(+) antiporter. Mediates the electroneutral exchange of intracellular H(+) ions for extracellular Na(+). Major apical Na(+)/H(+) exchanger in the base of the colonic crypt. Controls in the colonic crypt intracellular pH (pHi) to direct colonic epithelial cell differentiation into the absorptive enterocyte lineage at the expense of the secretory lineage. This is Sodium/hydrogen exchanger 2 (SLC9A2) from Oryctolagus cuniculus (Rabbit).